The primary structure comprises 408 residues: Branched-chain amino acid aminotransferase 2, chloroplastic (408 aa).

A chloroplast-targeting transit peptide spans 1–58; the sequence is MDCAAALLPGFHPNYLLCPSRHFSSLLPKTDLSSPLKFQLQNKQLSLASSHGFSPVIC. Position 152 (Arg-152) interacts with pyridoxal 5'-phosphate. Lys-254 functions as the Proton acceptor in the catalytic mechanism. At Lys-254 the chain carries N6-(pyridoxal phosphate)lysine. Glu-290 contacts pyridoxal 5'-phosphate.

Belongs to the class-IV pyridoxal-phosphate-dependent aminotransferase family. Pyridoxal 5'-phosphate serves as cofactor. Expressed in lupulin glands and leaves.

The protein resides in the plastid. The protein localises to the chloroplast. The catalysed reaction is L-isoleucine + 2-oxoglutarate = (S)-3-methyl-2-oxopentanoate + L-glutamate. It carries out the reaction L-leucine + 2-oxoglutarate = 4-methyl-2-oxopentanoate + L-glutamate. It catalyses the reaction L-valine + 2-oxoglutarate = 3-methyl-2-oxobutanoate + L-glutamate. It functions in the pathway amino-acid biosynthesis; L-isoleucine biosynthesis; L-isoleucine from 2-oxobutanoate: step 4/4. The protein operates within amino-acid biosynthesis; L-leucine biosynthesis; L-leucine from 3-methyl-2-oxobutanoate: step 4/4. It participates in amino-acid biosynthesis; L-valine biosynthesis; L-valine from pyruvate: step 4/4. Converts 2-oxo acids to branched-chain amino acids. Shows no kinetic preferences corresponding to anabolic or catabolic functions, but likely involved in BCAA biosynthesis. The polypeptide is Branched-chain amino acid aminotransferase 2, chloroplastic (Humulus lupulus (European hop)).